The following is a 443-amino-acid chain: UDP-N-acetylmuramate--L-alanine ligase (443 aa).

111–117 (GAHGKTS) lines the ATP pocket.

This sequence belongs to the MurCDEF family.

Its subcellular location is the cytoplasm. It carries out the reaction UDP-N-acetyl-alpha-D-muramate + L-alanine + ATP = UDP-N-acetyl-alpha-D-muramoyl-L-alanine + ADP + phosphate + H(+). The protein operates within cell wall biogenesis; peptidoglycan biosynthesis. Cell wall formation. The protein is UDP-N-acetylmuramate--L-alanine ligase of Levilactobacillus brevis (strain ATCC 367 / BCRC 12310 / CIP 105137 / JCM 1170 / LMG 11437 / NCIMB 947 / NCTC 947) (Lactobacillus brevis).